The primary structure comprises 1385 residues: DNA-directed RNA polymerase subunit beta'' (1385 aa).

Zn(2+) is bound by residues cysteine 224, cysteine 294, cysteine 301, and cysteine 304.

It belongs to the RNA polymerase beta' chain family. RpoC2 subfamily. In plastids the minimal PEP RNA polymerase catalytic core is composed of four subunits: alpha, beta, beta', and beta''. When a (nuclear-encoded) sigma factor is associated with the core the holoenzyme is formed, which can initiate transcription. It depends on Zn(2+) as a cofactor.

The protein resides in the plastid. It localises to the chloroplast. It carries out the reaction RNA(n) + a ribonucleoside 5'-triphosphate = RNA(n+1) + diphosphate. In terms of biological role, DNA-dependent RNA polymerase catalyzes the transcription of DNA into RNA using the four ribonucleoside triphosphates as substrates. This Illicium oligandrum (Star anise) protein is DNA-directed RNA polymerase subunit beta''.